Here is a 280-residue protein sequence, read N- to C-terminus: Phosphatidylglycerol--prolipoprotein diacylglyceryl transferase (280 aa).

3 helical membrane passes run 15 to 35, 60 to 80, and 90 to 110; these read IFSI…IFAL, FIGL…PVFF, and IWEG…VLLF. R138 is an a 1,2-diacyl-sn-glycero-3-phospho-(1'-sn-glycerol) binding site. The next 2 helical transmembrane spans lie at 217–237 and 257–277; these read MPFG…RIFL and GQLL…NIYV.

It belongs to the Lgt family.

It is found in the cell membrane. The catalysed reaction is L-cysteinyl-[prolipoprotein] + a 1,2-diacyl-sn-glycero-3-phospho-(1'-sn-glycerol) = an S-1,2-diacyl-sn-glyceryl-L-cysteinyl-[prolipoprotein] + sn-glycerol 1-phosphate + H(+). The protein operates within protein modification; lipoprotein biosynthesis (diacylglyceryl transfer). Functionally, catalyzes the transfer of the diacylglyceryl group from phosphatidylglycerol to the sulfhydryl group of the N-terminal cysteine of a prolipoprotein, the first step in the formation of mature lipoproteins. The sequence is that of Phosphatidylglycerol--prolipoprotein diacylglyceryl transferase from Buchnera aphidicola subsp. Baizongia pistaciae (strain Bp).